Consider the following 650-residue polypeptide: Acetyl-coenzyme A synthetase (650 aa).

CoA-binding positions include 191 to 194, Thr-311, and Asn-335; that span reads RGGR. Residues 387–389, 411–416, Asp-501, and Arg-516 each bind ATP; these read GEP and DTWWQT. Ser-524 is a CoA binding site. Residue Arg-527 coordinates ATP. Mg(2+)-binding residues include Val-538, His-540, and Ile-543. Arg-585 contributes to the CoA binding site. Residue Lys-610 is modified to N6-acetyllysine.

The protein belongs to the ATP-dependent AMP-binding enzyme family. Mg(2+) serves as cofactor. Acetylated. Deacetylation by the SIR2-homolog deacetylase activates the enzyme.

It catalyses the reaction acetate + ATP + CoA = acetyl-CoA + AMP + diphosphate. Catalyzes the conversion of acetate into acetyl-CoA (AcCoA), an essential intermediate at the junction of anabolic and catabolic pathways. AcsA undergoes a two-step reaction. In the first half reaction, AcsA combines acetate with ATP to form acetyl-adenylate (AcAMP) intermediate. In the second half reaction, it can then transfer the acetyl group from AcAMP to the sulfhydryl group of CoA, forming the product AcCoA. The protein is Acetyl-coenzyme A synthetase of Vibrio vulnificus (strain YJ016).